The primary structure comprises 260 residues: Indole-3-glycerol phosphate synthase (260 aa).

It belongs to the TrpC family.

The catalysed reaction is 1-(2-carboxyphenylamino)-1-deoxy-D-ribulose 5-phosphate + H(+) = (1S,2R)-1-C-(indol-3-yl)glycerol 3-phosphate + CO2 + H2O. The protein operates within amino-acid biosynthesis; L-tryptophan biosynthesis; L-tryptophan from chorismate: step 4/5. This chain is Indole-3-glycerol phosphate synthase, found in Staphylococcus aureus (strain bovine RF122 / ET3-1).